The primary structure comprises 672 residues: Transcriptional regulator Kaiso (672 aa).

The interval 1–103 (MESRKLISAT…RSDLLDELIK (103 aa)) is interaction with NCOR1. Residues 1–136 (MESRKLISAT…SGTAQDGNTE (136 aa)) are self-association. Residues 32-94 (CDVTVIVEDR…IYSSKIVRVR (63 aa)) enclose the BTB domain. Residues Lys151 and Lys153 each participate in a glycyl lysine isopeptide (Lys-Gly) (interchain with G-Cter in SUMO2) cross-link. Thr251 carries the post-translational modification Phosphothreonine. The tract at residues 298 to 573 (LPNHMPSSIN…FMSSHIKSVH (276 aa)) is interaction with CBFA2T3. A disordered region spans residues 325 to 354 (KANEEEEEEIIDDDDDTISSSPDSAVSNTS). A compositionally biased stretch (acidic residues) spans 328–341 (EEEEEEIIDDDDDT). Glycyl lysine isopeptide (Lys-Gly) (interchain with G-Cter in SUMO2) cross-links involve residues Lys390, Lys407, Lys414, Lys449, Lys465, Lys474, and Lys479. The interaction with CTNND1 stretch occupies residues 454-672 (EGEARLENEI…EFEFIIPESY (219 aa)). Positions 471–480 (MANKRMKVKH) match the Nuclear localization signal motif. 3 C2H2-type zinc fingers span residues 494 to 516 (YICIVCKRSYVCLTSLRRHFNIH), 522 to 544 (YPCRYCEKVFPLAEYRTKHEIHH), and 550 to 573 (YQCLACGKSFINYQFMSSHIKSVH). The interval 514–638 (NIHSWEKKYP…TTTSTQNKPM (125 aa)) is required for DNA-binding. Residues Lys539, Lys570, Lys582, Lys611, and Lys618 each participate in a glycyl lysine isopeptide (Lys-Gly) (interchain with G-Cter in SUMO2) cross-link. The disordered stretch occupies residues 616–635 (GYKVDTGKEPPVGTTTSTQN).

Self-associates. Interacts with CTNND2. Interacts with CTNND1, and this interaction inhibits binding to both methylated and non-methylated DNA. Interacts with NCOR1. Interacts with KPNA2/RCH1, which may mediate nuclear import of this protein. Interacts with CBFA2T3. In terms of tissue distribution, expressed in vascular endothelium.

It is found in the nucleus. The protein localises to the cytoplasm. Functionally, transcriptional regulator with bimodal DNA-binding specificity. Binds to methylated CpG dinucleotides in the consensus sequence 5'-CGCG-3' and also binds to the non-methylated consensus sequence 5'-CTGCNA-3' also known as the consensus kaiso binding site (KBS). Recruits the N-CoR repressor complex to promote histone deacetylation and the formation of repressive chromatin structures in target gene promoters. May contribute to the repression of target genes of the Wnt signaling pathway. May also activate transcription of a subset of target genes by the recruitment of CTNND2. Represses expression of MMP7 in conjunction with transcriptional corepressors CBFA2T3, CBFA2T2 and RUNX1T1. In Homo sapiens (Human), this protein is Transcriptional regulator Kaiso (ZBTB33).